The chain runs to 338 residues: DNA polymerase III subunit delta (338 aa).

This sequence belongs to the DNA polymerase HolA subunit family. As to quaternary structure, DNA polymerase III contains a core (composed of alpha, epsilon and theta chains) that associates with a tau subunit. This core dimerizes to form the POLIII' complex. PolIII' associates with the gamma complex (composed of gamma, delta, delta', psi and chi chains) and with the beta chain to form the complete DNA polymerase III complex.

It carries out the reaction DNA(n) + a 2'-deoxyribonucleoside 5'-triphosphate = DNA(n+1) + diphosphate. DNA polymerase III is a complex, multichain enzyme responsible for most of the replicative synthesis in bacteria. This DNA polymerase also exhibits 3' to 5' exonuclease activity. The delta subunit seems to interact with the gamma subunit to transfer the beta subunit on the DNA. This is DNA polymerase III subunit delta (holA) from Buchnera aphidicola subsp. Schizaphis graminum (strain Sg).